The sequence spans 311 residues: Ribosomal RNA small subunit methyltransferase H (311 aa).

S-adenosyl-L-methionine-binding positions include 39 to 41 (GGH), Asp-59, Phe-81, Asp-102, and His-109.

Belongs to the methyltransferase superfamily. RsmH family.

It is found in the cytoplasm. The enzyme catalyses cytidine(1402) in 16S rRNA + S-adenosyl-L-methionine = N(4)-methylcytidine(1402) in 16S rRNA + S-adenosyl-L-homocysteine + H(+). Its function is as follows. Specifically methylates the N4 position of cytidine in position 1402 (C1402) of 16S rRNA. This is Ribosomal RNA small subunit methyltransferase H from Porphyromonas gingivalis (strain ATCC BAA-308 / W83).